The following is a 1493-amino-acid chain: DNA excision repair protein ERCC-6 (1493 aa).

The tract at residues M1–G39 is disordered. The tract at residues M1 to Y510 is N-terminal domain; essential for its chromatin remodeling activity. Positions H8–E27 are enriched in polar residues. At S10 the chain carries Phosphoserine; by ATM. Position 158 is a phosphoserine; by CDK2 (S158). K170 carries the post-translational modification N6-methylated lysine; by EHMT2. K205 is covalently cross-linked (Glycyl lysine isopeptide (Lys-Gly) (interchain with G-Cter in SUMO3)). Residue K255 forms a Glycyl lysine isopeptide (Lys-Gly) (interchain with G-Cter in SUMO2) linkage. 2 disordered regions span residues K287–K323 and G344–R453. An N6-methylated lysine; by EHMT2 modification is found at K297. A compositionally biased stretch (basic and acidic residues) spans R353–A363. Residues E364–E392 show a composition bias toward acidic residues. Phosphoserine is present on residues S429 and S430. N6-methylated lysine; by EHMT2 is present on K448. S486 and S489 each carry phosphoserine. A Helicase ATP-binding domain is found at W519–G695. Position 532 to 539 (D532 to T539) interacts with ATP. The short motif at D646 to H649 is the DEAH box element. Residues V843–Y1002 enclose the Helicase C-terminal domain. Disordered regions lie at residues P1042–I1147, H1181–N1247, and R1318–L1384. Residue K1054 is modified to N6-methylated lysine; by EHMT2. Polar residues predominate over residues I1123–P1141. The residue at position 1142 (S1142) is a Phosphoserine. A compositionally biased stretch (basic residues) spans L1200 to K1210. 2 stretches are compositionally biased toward basic and acidic residues: residues H1211 to R1221 and Q1232 to N1247. The span at K1327–N1336 shows a compositional bias: basic residues. Residues S1337–E1351 are compositionally biased toward polar residues. S1348 is subject to Phosphoserine. The span at K1352 to D1376 shows a compositional bias: basic and acidic residues. The CSA-interacting motif (CIM) signature appears at S1386–H1398. A ubiquitin-binding domain (UBD) region spans residues I1400–L1428. The interval V1429–C1493 is winged-helix domain (WHD). Positions S1446 to C1493 are essential for its interaction with RNA polymerase II, transcription-coupled nucleotide excision repair activity, association with chromatin after UV irradiation and for mediating the UV-induced translocation of ERRC8 to the nuclear matrix.

Belongs to the SNF2/RAD54 helicase family. Homodimer. Binds DNA. Interacts with ERCC8. Interacts with RNA polymerase II; interaction is enhanced by UV irradiation. Component of the B-WICH complex, at least composed of SMARCA5/SNF2H, BAZ1B/WSTF, SF3B1, DEK, MYO1C, ERCC6, MYBBP1A and DDX21. Interacts with KIAA1530/UVSSA. Interacts with ELOA and CUL5; the interaction is induced by DNA damaging agents or by inhibitors of RNA polymerase II elongation. Interacts (via WHD region) with RIF1. Interacts with SMARCC2/BAF170, SMARCB1/BAF47 and the neuron-specific chromatin remodeling complex (nBAF complex). Interacts with ERCC5/XPG (via C-terminus); the interaction stimulates ERCC6/CSB binding to the DNA repair bubble and ERCC6/CSB ATPase activity. May form a complex composed of RNA polymerase II, ERCC6/CSB and ERCC5/XPG which associates with the DNA repair bubble during transcription-coupled nucleotide excision repair. Interacts with CAND1, CSTF1, DDX3X, DDX5, DDX17, DDX23, DHX36, HDAC1, HNRNPU, MTA2, PRPF3, PSMD3, RBBP4, SFPQ, SMARCA1, SMARCA2, TOP1, USP7, XRCC5, COPS3, COPS4, COPS6, DDX1, DDX41, GATAD2A, GATAD2B, PRPF4, PSMC5, SF3B2, CTR9, NONO, PSMD12 and TOP2A. Post-translationally, phosphorylated in a cell cycle-dependent manner at Ser-158 by cyclin A-CDK2 and at Ser-10 by ATM in response to DNA damage. Phosphorylation at these two sites promotes the intramolecular interaction of the N-terminal domain with the helicase ATP-binding domain, thereby probably releasing the inhibitory effect of the N-terminal domain on its ATPase activity. Phosphorylation is essential for its chromatin remodeling activity. In terms of processing, ubiquitinated at the C-terminus. Ubiquitination by the CSA complex leads to ERCC6 proteasomal degradation in a UV-dependent manner. Stabilized following interaction with KIAA1530/UVSSA, which promotes recruitment of deubiquitinating enzyme USP7, leading to deubiquitination of ERCC6 thereby preventing UV-induced degradation of ERCC6 by the proteasome. Sumoylation at Lys-205 in an UV-radiation-dependent manner is essential for its transcription-coupled nucleotide excision repair activity.

It localises to the nucleus. The protein resides in the chromosome. It carries out the reaction ATP + H2O = ADP + phosphate + H(+). In terms of biological role, essential factor involved in transcription-coupled nucleotide excision repair (TC-NER), a process during which RNA polymerase II-blocking lesions are rapidly removed from the transcribed strand of active genes. Plays a central role in the initiation of the TC-NER process: specifically recognizes and binds RNA polymerase II stalled at a lesion, and mediates recruitment of ERCC8/CSA, initiating DNA damage excision by TFIIH recruitment. Upon DNA-binding, it locally modifies DNA conformation by wrapping the DNA around itself, thereby modifying the interface between stalled RNA polymerase II and DNA. Acts as a chromatin remodeler at DSBs; DNA-dependent ATPase-dependent activity is essential for this function. Plays an important role in regulating the choice of the DNA double-strand breaks (DSBs) repair pathway and G2/M checkpoint activation; DNA-dependent ATPase activity is essential for this function. Regulates the DNA repair pathway choice by inhibiting non-homologous end joining (NHEJ), thereby promoting the homologous recombination (HR)-mediated repair of DSBs during the S/G2 phases of the cell cycle. Mediates the activation of the ATM- and CHEK2-dependent DNA damage responses thus preventing premature entry of cells into mitosis following the induction of DNA DSBs. Remodels chromatin by evicting histones from chromatin flanking DSBs, limiting RIF1 accumulation at DSBs thereby promoting BRCA1-mediated HR. Required for stable recruitment of ELOA and CUL5 to DNA damage sites. Also involved in UV-induced translocation of ERCC8 to the nuclear matrix. Essential for neuronal differentiation and neuritogenesis; regulates transcription and chromatin remodeling activities required during neurogenesis. This is DNA excision repair protein ERCC-6 from Homo sapiens (Human).